We begin with the raw amino-acid sequence, 157 residues long: Arginine regulator (157 aa).

The protein belongs to the ArgR family.

The protein resides in the cytoplasm. It participates in amino-acid degradation; L-arginine degradation via ADI pathway. In terms of biological role, regulates the transcription of the arc operon, involved in arginine catabolism. The protein is Arginine regulator (argR1) of Streptococcus pyogenes serotype M3 (strain ATCC BAA-595 / MGAS315).